Consider the following 190-residue polypeptide: UPF0301 protein RSc0675 (190 aa).

Belongs to the UPF0301 (AlgH) family.

The polypeptide is UPF0301 protein RSc0675 (Ralstonia nicotianae (strain ATCC BAA-1114 / GMI1000) (Ralstonia solanacearum)).